We begin with the raw amino-acid sequence, 187 residues long: Peptide deformylase (187 aa).

The Fe cation site is built by C114 and H157. E158 is a catalytic residue. H161 lines the Fe cation pocket.

Belongs to the polypeptide deformylase family. The cofactor is Fe(2+).

It carries out the reaction N-terminal N-formyl-L-methionyl-[peptide] + H2O = N-terminal L-methionyl-[peptide] + formate. Functionally, removes the formyl group from the N-terminal Met of newly synthesized proteins. Requires at least a dipeptide for an efficient rate of reaction. N-terminal L-methionine is a prerequisite for activity but the enzyme has broad specificity at other positions. In Enterococcus faecalis (strain ATCC 700802 / V583), this protein is Peptide deformylase.